Here is a 771-residue protein sequence, read N- to C-terminus: Transducin-like enhancer protein 3-B (771 aa).

A q domain region spans residues 1-141 (MYPQGRHPAP…PLTQQQLQAQ (141 aa)). Positions 137 to 148 (QLQAQHLSHAAH) are enriched in low complexity. Disordered stretches follow at residues 137–174 (QLQA…GSGS) and 196–360 (HHDL…MEAL). The interval 142–209 (HLSHAAHGPP…EHRERESSTN (68 aa)) is GP domain. Residues 196–206 (HHDLEHRERES) are compositionally biased toward basic and acidic residues. The span at 207–217 (STNNSVSPSDS) shows a compositional bias: low complexity. The interval 210 to 278 (NSVSPSDSLR…TPRVSPSHSP (69 aa)) is ccN domain. Composition is skewed to basic and acidic residues over residues 219–257 (RASE…KSDD) and 282–293 (GLDKARALKKDA). The Nuclear localization signal motif lies at 235 to 238 (KKRR). Residues 279-451 (PENGLDKARA…GGKPAYSFHV (173 aa)) are SP domain. The span at 294 to 309 (PNSPASVASSGSTPSS) shows a compositional bias: low complexity. S296 and S299 each carry phosphoserine. The span at 310-319 (KAKDHPHNDK) shows a compositional bias: basic and acidic residues. Residues 320-332 (SSTPGLKSNTPTP) show a composition bias toward polar residues. WD repeat units follow at residues 483–521 (SHGE…SKSP), 529–568 (NRDN…PRIK), 573–612 (SSAP…LVRQ), 615–654 (GHTD…QLQQ), 656–695 (DFTS…KYQL), 697–736 (LHES…SIFQ), and 738–771 (KESS…EVIY).

The protein belongs to the WD repeat Groucho/TLE family. At gastrulation, expression is absent within the axial mesoderm. After gastrulation is complete, expressed in the presomitic mesoderm, but expression in the tailbud doesn't begin until the six to seven somite stage, after which it becomes abundant. Expression is abundant throughout somitogenesis within the posterior half of the somites, but is absent from older somites. Also expressed in a dynamic manner within the neural plate.

Its subcellular location is the nucleus. In terms of biological role, transcriptional corepressor that binds to a number of transcription factors. Inhibits the transcriptional activation mediated by CTNNB1 and TCF family members in Wnt signaling. The effects of full-length TLE family members may be modulated by association with dominant-negative AES. The chain is Transducin-like enhancer protein 3-B from Danio rerio (Zebrafish).